A 256-amino-acid polypeptide reads, in one-letter code: Stanniocalcin (256 aa).

The N-terminal stretch at 1-18 (MLAKFGLCAVFLVLGTAA) is a signal peptide. A propeptide spanning residues 19-33 (TFDTDPEEASPRRAR) is cleaved from the precursor. N-linked (GlcNAc...) asparagine glycosylation is present at Asn-62.

It belongs to the stanniocalcin family. Homodimer; disulfide-linked. In terms of tissue distribution, produced and secreted by the corpuscles of Stannius.

It localises to the secreted. Functionally, its primary function is the prevention of hypercalcemia. Upon release into the circulation, it lowers calcium transport by the gills, thereby reducing its rate of influx from the environment into the extracellular compartment. STC also stimulates phosphate reabsorption by renal proximal tubules. The consequence of this action is increased levels of plasma phosphate, which combines with excess calcium and promotes its disposal into bone and scales. The sequence is that of Stanniocalcin (stc) from Oncorhynchus kisutch (Coho salmon).